The following is a 522-amino-acid chain: Secreted RxLR effector protein 105 (522 aa).

The signal sequence occupies residues 1–21; that stretch reads MRGPCSVITALLVVASSQIAA. The RxLR-dEER signature appears at 48–63; sequence RYLRGSQHVLDSNEER.

The protein belongs to the RxLR effector family.

The protein resides in the secreted. Its subcellular location is the host nucleus. The protein localises to the host cytoplasm. In terms of biological role, secreted effector that dos not suppress the host cell death induced by cell death-inducing proteins. The chain is Secreted RxLR effector protein 105 from Plasmopara viticola (Downy mildew of grapevine).